The sequence spans 85 residues: Splicing factor 3B subunit 5 (85 aa).

This sequence belongs to the SF3B5 family. Component of the SF3B complex. SF3B complex associates with the splicing factor SF3A complex and a 12S RNA unit to form the U2 small nuclear ribonucleoproteins complex (U2 snRNP). Identified in the SAGA transcription regulatory histone acetylation (HAT) complex; the interaction is RNA-independent.

It is found in the nucleus. Functionally, involved in pre-mRNA splicing as component of spliceosome. As part of the spliceosome complex, plays a role in the regulation of spermatogonial differentiation. When associated with the SAGA transcription regulatory histone acetylation (HAT) complex, might be involved in the transcriptional activation of a subset of SAGA-regulated genes. This is Splicing factor 3B subunit 5 from Drosophila melanogaster (Fruit fly).